A 258-amino-acid polypeptide reads, in one-letter code: Sec-independent protein translocase protein TatC (258 aa).

The Cytoplasmic segment spans residues 2–23 (SVEDTQPLITHLIELRKRLLNC). The helical transmembrane segment at 24-44 (IISVIVIFLCLVYFANDIYHL) threads the bilayer. The Periplasmic portion of the chain corresponds to 45 to 75 (VSAPLIKQLPQGSTMIATDVASPFFTPIKLT). The helical transmembrane segment at 76–96 (FMVSLILSAPVILYQVWAFIA) threads the bilayer. The Cytoplasmic segment spans residues 97–115 (PALYKHERRLVVPLLVSSS). Residues 116 to 136 (LLFYIGMAFAYFVVFPLAFGF) traverse the membrane as a helical segment. Topologically, residues 137 to 156 (LANTAPEGVQVSTDIASYLS) are periplasmic. A helical transmembrane segment spans residues 157 to 177 (FVMALFMAFGVSFEVPVAIVL). Topologically, residues 178 to 192 (LCWMGITSPEDLRKK) are cytoplasmic. Residues 193 to 210 (RPYVLVGAFVVGMLLTPP) form a helical membrane-spanning segment. Residue Asp211 is a topological domain, periplasmic. Residues 212-232 (VFSQTLLAIPMYCLFEIGVFF) traverse the membrane as a helical segment. The Cytoplasmic segment spans residues 233-258 (SRFYVGKGRNREEENDAEAESEKTEE).

The protein belongs to the TatC family. The Tat system comprises two distinct complexes: a TatABC complex, containing multiple copies of TatA, TatB and TatC subunits, and a separate TatA complex, containing only TatA subunits. Substrates initially bind to the TatABC complex, which probably triggers association of the separate TatA complex to form the active translocon.

It localises to the cell inner membrane. Functionally, part of the twin-arginine translocation (Tat) system that transports large folded proteins containing a characteristic twin-arginine motif in their signal peptide across membranes. Together with TatB, TatC is part of a receptor directly interacting with Tat signal peptides. In Escherichia coli O6:H1 (strain CFT073 / ATCC 700928 / UPEC), this protein is Sec-independent protein translocase protein TatC.